Reading from the N-terminus, the 214-residue chain is uncharacterized protein (214 aa).

4 helical membrane-spanning segments follow: residues 10-30 (IPPLAVYLLVSGVVGVESLGI), 55-75 (IGVGVVAVIGAAVGDSIGYAI), 147-167 (VSGAICWAGGTTALVYFAGMA), and 174-194 (RFSWIALIITVVVGIIAAILL).

This sequence belongs to the DedA family.

The protein localises to the cell membrane. This is an uncharacterized protein from Mycobacterium leprae (strain TN).